We begin with the raw amino-acid sequence, 324 residues long: Annexin A10 (324 aa).

Annexin repeat units follow at residues 17–88 (FNPM…GLMY), 89–160 (PPPS…NLVQ), 171–243 (AMAA…AIVR), and 247–318 (DKPS…AICA).

Belongs to the annexin family.

The polypeptide is Annexin A10 (Anxa10) (Mus musculus (Mouse)).